A 184-amino-acid polypeptide reads, in one-letter code: Ribosome-recycling factor (184 aa).

The protein belongs to the RRF family.

It is found in the cytoplasm. In terms of biological role, responsible for the release of ribosomes from messenger RNA at the termination of protein biosynthesis. May increase the efficiency of translation by recycling ribosomes from one round of translation to another. This is Ribosome-recycling factor from Cutibacterium acnes (strain DSM 16379 / KPA171202) (Propionibacterium acnes).